A 198-amino-acid polypeptide reads, in one-letter code: MSWIRIRRSGVLLLALVLSGCINQQQQPQPAAPVEPVTPPVNVPQPPKAEPGQNVPPPPKMQPLNWSATVSPLVGQMLKADGINAGNVLLVDNVKNSTNGSLQSAKATAALLNSLENNGQFSLVTPQQLAAARQTLGLSADDSLVSRSKAIGLARYVGAQYVLYSNAEGDIKSPSLQLQLMLVQTGEIIWSGSGAVVH.

The first 20 residues, 1–20 (MSWIRIRRSGVLLLALVLSG), serve as a signal peptide directing secretion. The N-palmitoyl cysteine moiety is linked to residue Cys-21. Cys-21 carries the S-diacylglycerol cysteine lipid modification. The tract at residues 28–62 (PQPAAPVEPVTPPVNVPQPPKAEPGQNVPPPPKMQ) is disordered. Residues 30–61 (PAAPVEPVTPPVNVPQPPKAEPGQNVPPPPKM) are compositionally biased toward pro residues.

This sequence belongs to the LpoB family. As to quaternary structure, interacts with PBP1b.

The protein localises to the cell outer membrane. Its function is as follows. Regulator of peptidoglycan synthesis that is essential for the function of penicillin-binding protein 1B (PBP1b). In Erwinia amylovora (strain CFBP1430), this protein is Penicillin-binding protein activator LpoB.